Reading from the N-terminus, the 651-residue chain is Acetyl-coenzyme A synthetase (651 aa).

CoA is bound by residues 191–194 (RGGK), threonine 311, and asparagine 335. ATP contacts are provided by residues 387 to 389 (GEP), 411 to 416 (DTWWQT), aspartate 500, and arginine 515. Serine 523 provides a ligand contact to CoA. Arginine 526 contacts ATP. The Mg(2+) site is built by valine 537, histidine 539, and valine 542. A CoA-binding site is contributed by arginine 584. Lysine 609 carries the N6-acetyllysine modification.

The protein belongs to the ATP-dependent AMP-binding enzyme family. It depends on Mg(2+) as a cofactor. Acetylated. Deacetylation by the SIR2-homolog deacetylase activates the enzyme.

It catalyses the reaction acetate + ATP + CoA = acetyl-CoA + AMP + diphosphate. Catalyzes the conversion of acetate into acetyl-CoA (AcCoA), an essential intermediate at the junction of anabolic and catabolic pathways. AcsA undergoes a two-step reaction. In the first half reaction, AcsA combines acetate with ATP to form acetyl-adenylate (AcAMP) intermediate. In the second half reaction, it can then transfer the acetyl group from AcAMP to the sulfhydryl group of CoA, forming the product AcCoA. This is Acetyl-coenzyme A synthetase from Pseudomonas syringae pv. syringae (strain B728a).